Here is a 368-residue protein sequence, read N- to C-terminus: COP9 signalosome complex subunit 5 (368 aa).

The 138-residue stretch at 56–193 (IKISAIALLK…IGAFRTYPEG (138 aa)) folds into the MPN domain. 3 residues coordinate Zn(2+): His-139, His-141, and Asp-152. Residues 139 to 152 (HSHPGYGCWLSGID) carry the JAMM motif motif. Residues 347–368 (TEPEKAGPSPSAPEPAVEMADA) form a disordered region.

The protein belongs to the peptidase M67A family. CSN5 subfamily. As to quaternary structure, component of the CSN complex, probably composed of csn-1, csn-2, csn-3, csn-4, csn-5, csn-6 and csn-7. Within the complex it probably interacts directly with csn-1. Interacts with glh-1 and glh-3. Interacts with lag-1. Interacts with kgb-1. A divalent metal cation serves as cofactor.

It localises to the cytoplasm. Its subcellular location is the nucleus. In terms of biological role, probable protease subunit of the COP9 signalosome complex (CSN), a complex involved in various cellular and developmental processes. The CSN complex is an essential regulator of the ubiquitin (Ubl) conjugation pathway by mediating the deneddylation of the cullin subunits of the SCF-type E3 ligase complexes, leading to decrease the Ubl ligase activity of SCF. In the complex, it probably acts as the catalytic center that mediates the cleavage of Nedd8 from cullins. It however has no metalloprotease activity by itself and requires the other subunits of the CSN complex. The CSN complex plays an essential role in embryogenesis and oogenesis and is required to regulate microtubule stability in the early embryo. Mediates mei-3/katanin targeting for degradation at the meiosis to mitosis transition via deneddylation of cul-3. May stabilize glh-1 protein levels by antagonizing kgb-1. In Caenorhabditis elegans, this protein is COP9 signalosome complex subunit 5 (csn-5).